Consider the following 154-residue polypeptide: Large ribosomal subunit protein uL30 (154 aa).

Positions 114 to 146 (PTLRLHPPRGGHDGVKHPVKEGGQLGKHDTEGI) are disordered. Basic and acidic residues predominate over residues 123 to 144 (GGHDGVKHPVKEGGQLGKHDTE).

The protein belongs to the universal ribosomal protein uL30 family. As to quaternary structure, part of the 50S ribosomal subunit. Binds 5S rRNA.

In terms of biological role, this is one of 5 proteins that mediate the attachment of the 5S rRNA onto the large ribosomal subunit, stabilizing the orientation of adjacent RNA domains. This is Large ribosomal subunit protein uL30 from Haloarcula marismortui (strain ATCC 43049 / DSM 3752 / JCM 8966 / VKM B-1809) (Halobacterium marismortui).